The following is a 117-amino-acid chain: Large ribosomal subunit protein uL22 (117 aa).

This sequence belongs to the universal ribosomal protein uL22 family. Part of the 50S ribosomal subunit.

Its function is as follows. This protein binds specifically to 23S rRNA; its binding is stimulated by other ribosomal proteins, e.g. L4, L17, and L20. It is important during the early stages of 50S assembly. It makes multiple contacts with different domains of the 23S rRNA in the assembled 50S subunit and ribosome. Functionally, the globular domain of the protein is located near the polypeptide exit tunnel on the outside of the subunit, while an extended beta-hairpin is found that lines the wall of the exit tunnel in the center of the 70S ribosome. The polypeptide is Large ribosomal subunit protein uL22 (Lactobacillus delbrueckii subsp. bulgaricus (strain ATCC 11842 / DSM 20081 / BCRC 10696 / JCM 1002 / NBRC 13953 / NCIMB 11778 / NCTC 12712 / WDCM 00102 / Lb 14)).